The sequence spans 49 residues: Large ribosomal subunit protein bL33A (49 aa).

The protein belongs to the bacterial ribosomal protein bL33 family.

This is Large ribosomal subunit protein bL33A from Leuconostoc mesenteroides subsp. mesenteroides (strain ATCC 8293 / DSM 20343 / BCRC 11652 / CCM 1803 / JCM 6124 / NCDO 523 / NBRC 100496 / NCIMB 8023 / NCTC 12954 / NRRL B-1118 / 37Y).